The sequence spans 216 residues: Pyrophosphatase PpaX (216 aa).

Residue Asp-9 is the Nucleophile of the active site.

This sequence belongs to the HAD-like hydrolase superfamily. PpaX family. Mg(2+) is required as a cofactor.

It catalyses the reaction diphosphate + H2O = 2 phosphate + H(+). Its function is as follows. Hydrolyzes pyrophosphate formed during P-Ser-HPr dephosphorylation by HPrK/P. Might play a role in controlling the intracellular pyrophosphate pool. This Bacillus cereus (strain AH820) protein is Pyrophosphatase PpaX.